Reading from the N-terminus, the 184-residue chain is Gastrokine-2 (184 aa).

Residues methionine 1–alanine 20 form the signal peptide. A BRICHOS domain is found at histidine 54–glycine 151. An intrachain disulfide couples cysteine 81 to cysteine 143.

As to quaternary structure, heterodimer with TFF1; disulfide linked. Interacts with TFF2.

The protein resides in the secreted. This Rattus norvegicus (Rat) protein is Gastrokine-2 (Gkn2).